Consider the following 526-residue polypeptide: NAD(P)H-quinone oxidoreductase subunit 2 (526 aa).

14 helical membrane passes run 16 to 36 (ILPESIVILTLIVVLVGDLIV), 43 to 63 (WIPYAAIAGLLGSVFALYLGW), 80 to 100 (LSILFRGIIVLSTAFTIMMSV), 107 to 127 (GTALSEFICILLTATLGGMFL), 133 to 153 (LVMIFVSLEMLSISSYLLTGY), 168 to 188 (LLIGAASSAIFLYGVSLLYGL), 211 to 231 (LALAIALVFAIAGIAFKISAV), 245 to 265 (PTPVVAFLSVGSKAAGFALAI), 279 to 299 (WHFIFTALAILSMVLGNVVAL), 307 to 327 (MLAYSSIAQAGFVMIGLVAGT), 335 to 355 (IFYLLVYLFMNLGAFTCVILF), 379 to 399 (LGLSVCLLSLGGIPPLAGFFG), 401 to 421 (IYLFWAGWQAGLYGLVLLGLI), and 469 to 489 (LVLSVIITSLAGILSNPLFVI).

It belongs to the complex I subunit 2 family. As to quaternary structure, NDH-1 can be composed of about 15 different subunits; different subcomplexes with different compositions have been identified which probably have different functions.

The protein resides in the cellular thylakoid membrane. It catalyses the reaction a plastoquinone + NADH + (n+1) H(+)(in) = a plastoquinol + NAD(+) + n H(+)(out). It carries out the reaction a plastoquinone + NADPH + (n+1) H(+)(in) = a plastoquinol + NADP(+) + n H(+)(out). In terms of biological role, NDH-1 shuttles electrons from an unknown electron donor, via FMN and iron-sulfur (Fe-S) centers, to quinones in the respiratory and/or the photosynthetic chain. The immediate electron acceptor for the enzyme in this species is believed to be plastoquinone. Couples the redox reaction to proton translocation, and thus conserves the redox energy in a proton gradient. Cyanobacterial NDH-1 also plays a role in inorganic carbon-concentration. In Picosynechococcus sp. (strain ATCC 27264 / PCC 7002 / PR-6) (Agmenellum quadruplicatum), this protein is NAD(P)H-quinone oxidoreductase subunit 2.